Reading from the N-terminus, the 587-residue chain is Adenine deaminase (587 aa).

This sequence belongs to the metallo-dependent hydrolases superfamily. Adenine deaminase family. Mn(2+) serves as cofactor.

It carries out the reaction adenine + H2O + H(+) = hypoxanthine + NH4(+). The polypeptide is Adenine deaminase (Shewanella halifaxensis (strain HAW-EB4)).